The primary structure comprises 840 residues: Cullin-4 (840 aa).

The segment covering M1–T11 has biased composition (polar residues). A disordered region spans residues M1 to T82. Over residues T33–G48 the composition is skewed to basic and acidic residues. Residues F69–T82 show a composition bias toward polar residues. Residues D772 to E831 form the Cullin neddylation domain. Residue K786 forms a Glycyl lysine isopeptide (Lys-Gly) (interchain with G-Cter in NEDD8) linkage.

This sequence belongs to the cullin family. In terms of assembly, part of an E3 ubiquitin-protein ligase complex including cul-4 and ddb-1. Post-translationally, neddylated. Deneddylated via its interaction with the COP9 signalosome (CSN) complex.

It functions in the pathway protein modification; protein ubiquitination. Its function is as follows. Component of cullin-based E3 ubiquitin-protein ligase complexes which mediate the ubiquitination and subsequent proteasomal degradation of target proteins. The functional specificity of the E3 ubiquitin-protein ligase complex depends on the variable substrate recognition component. In association with ddb-1 directs ubiquitination of cdt-1 during S phase and is required for restraining DNA rereplication. Probably is involved in ubiquitination of cki-1. The chain is Cullin-4 (cul-4) from Caenorhabditis elegans.